Consider the following 478-residue polypeptide: ATP synthase subunit beta (478 aa).

Position 151–158 (151–158 (GGAGVGKT)) interacts with ATP.

Belongs to the ATPase alpha/beta chains family. F-type ATPases have 2 components, CF(1) - the catalytic core - and CF(0) - the membrane proton channel. CF(1) has five subunits: alpha(3), beta(3), gamma(1), delta(1), epsilon(1). CF(0) has three main subunits: a(1), b(2) and c(9-12). The alpha and beta chains form an alternating ring which encloses part of the gamma chain. CF(1) is attached to CF(0) by a central stalk formed by the gamma and epsilon chains, while a peripheral stalk is formed by the delta and b chains.

It localises to the cell inner membrane. It carries out the reaction ATP + H2O + 4 H(+)(in) = ADP + phosphate + 5 H(+)(out). Its function is as follows. Produces ATP from ADP in the presence of a proton gradient across the membrane. The catalytic sites are hosted primarily by the beta subunits. This is ATP synthase subunit beta from Azorhizobium caulinodans (strain ATCC 43989 / DSM 5975 / JCM 20966 / LMG 6465 / NBRC 14845 / NCIMB 13405 / ORS 571).